We begin with the raw amino-acid sequence, 446 residues long: C4-dicarboxylate transport protein 2 (446 aa).

10 helical membrane passes run 7–26 (PLFG…GIWA), 46–64 (MLIA…CGAG), 77–99 (VIYF…YAFG), 152–171 (ILQV…LLGE), 192–211 (AVVI…FTVG), 221–243 (LGFL…LGGI), 291–313 (VVGL…YLTL), 318–340 (IAQA…VALI), 353–375 (IVIL…VLVL), and 381–403 (IGIA…IAAW).

Belongs to the dicarboxylate/amino acid:cation symporter (DAACS) (TC 2.A.23) family.

Its subcellular location is the cell inner membrane. In terms of biological role, responsible for the transport of dicarboxylates such as succinate, fumarate, and malate from the periplasm across the membrane. This is C4-dicarboxylate transport protein 2 (dctA2) from Ralstonia nicotianae (strain ATCC BAA-1114 / GMI1000) (Ralstonia solanacearum).